Reading from the N-terminus, the 509-residue chain is Glutamate--tRNA ligase (509 aa).

The short motif at proline 20–threonine 30 is the 'HIGH' region element. Zn(2+) contacts are provided by cysteine 117, cysteine 119, cysteine 144, and histidine 146. A 'KMSKS' region motif is present at residues lysine 261–arginine 265. ATP is bound at residue lysine 264.

Belongs to the class-I aminoacyl-tRNA synthetase family. Glutamate--tRNA ligase type 1 subfamily. In terms of assembly, monomer. Requires Zn(2+) as cofactor.

It is found in the cytoplasm. The enzyme catalyses tRNA(Glu) + L-glutamate + ATP = L-glutamyl-tRNA(Glu) + AMP + diphosphate. Catalyzes the attachment of glutamate to tRNA(Glu) in a two-step reaction: glutamate is first activated by ATP to form Glu-AMP and then transferred to the acceptor end of tRNA(Glu). This chain is Glutamate--tRNA ligase, found in Psychrobacter cryohalolentis (strain ATCC BAA-1226 / DSM 17306 / VKM B-2378 / K5).